The sequence spans 638 residues: MDSDTSPNPFASSPPSSPSPRPSLPPPVPRKPSSLVSAASGSPPPTHRASFPDPARHPKMGATVPGPKPKTGYCCSIDKDISAGEQVHIVDALKTTEGGTASYITYVIRLGTHTVRRRYSAFLSLHQSLTGLYPVLIIPPIPSKQSLTDYAVKGQSKAREDATIIARRKRLLEDFLQRLIRHPILGGEHVLHRFLEEDVSWSEVLHSPPISLLSKNPLHAPSHNPTFQPTTPTSPSEAPATTSYIAHHLLPTPSPSHPLRQPDQRFMDSEAFTEKFQSHFSGTMEKVNRRVTKRWGERAHDMSELGGIWNGFSLVEQGKLGDAIEKVGRAVDAEYLATAALLQSWEKTTTEPLHIYSQFATLIRARLSFRHQKHVQYELVQEALETQRDKLEILENAEREARRLEEALERGGSVLASPQLEPEAARDERERAQRRARASQGFGLLSAVKHSLSGMIDMDPEATRRANIAKTRDNISQLEDSYQAAAQDLKYASMTLQADLDRFQRQKVADLREMAINLSQVHRDWCKQNLEAWKAAQAAVREIDPHPNRPAQTQTQVQSQQSHAGPSTLHAQTEDDVSKLGVDAMKNEIERVEIEIADKPLPKPSLAETGGDGVVPSPQPRQENDTEEREGHGPLGPL.

Over residues 1 to 14 the composition is skewed to low complexity; it reads MDSDTSPNPFASSP. Residues 1–69 are disordered; it reads MDSDTSPNPF…MGATVPGPKP (69 aa). Residues 15-30 are compositionally biased toward pro residues; the sequence is PSSPSPRPSLPPPVPR. A PX domain is found at 84–201; sequence GEQVHIVDAL…HRFLEEDVSW (118 aa). 4 residues coordinate a 1,2-diacyl-sn-glycero-3-phospho-(1D-myo-inositol-3-phosphate): Arg118, Ser120, Lys144, and Arg168. Disordered stretches follow at residues 215–239, 408–432, and 545–638; these read KNPL…SEAP, LERG…RERA, and PHPN…LGPL. The span at 225 to 239 shows a compositional bias: low complexity; the sequence is PTFQPTTPTSPSEAP. Residues 423–432 show a composition bias toward basic and acidic residues; it reads EAARDERERA. Residues 552–562 are compositionally biased toward low complexity; that stretch reads QTQTQVQSQQS. Residues 585-601 show a composition bias toward basic and acidic residues; it reads MKNEIERVEIEIADKPL.

Belongs to the sorting nexin family.

The protein localises to the endosome membrane. It is found in the endomembrane system. Functionally, may be required for cytoplasm to vacuole transport (Cvt) and pexophagy. The sequence is that of Sorting nexin-41 (SNX41) from Cryptococcus neoformans var. neoformans serotype D (strain B-3501A) (Filobasidiella neoformans).